The following is a 313-amino-acid chain: Porphobilinogen deaminase (313 aa).

Position 241 is an S-(dipyrrolylmethanemethyl)cysteine (cysteine 241).

The protein belongs to the HMBS family. Monomer. Dipyrromethane is required as a cofactor.

The enzyme catalyses 4 porphobilinogen + H2O = hydroxymethylbilane + 4 NH4(+). The protein operates within porphyrin-containing compound metabolism; protoporphyrin-IX biosynthesis; coproporphyrinogen-III from 5-aminolevulinate: step 2/4. In terms of biological role, tetrapolymerization of the monopyrrole PBG into the hydroxymethylbilane pre-uroporphyrinogen in several discrete steps. The protein is Porphobilinogen deaminase of Bacillus velezensis (strain DSM 23117 / BGSC 10A6 / LMG 26770 / FZB42) (Bacillus amyloliquefaciens subsp. plantarum).